A 525-amino-acid chain; its full sequence is UPF0288 protein MM_0912 (525 aa).

It belongs to the UPF0288 family.

This chain is UPF0288 protein MM_0912, found in Methanosarcina mazei (strain ATCC BAA-159 / DSM 3647 / Goe1 / Go1 / JCM 11833 / OCM 88) (Methanosarcina frisia).